We begin with the raw amino-acid sequence, 307 residues long: Ornithine carbamoyltransferase (307 aa).

Residues 56 to 59 (STRT), Gln83, Arg107, and 134 to 137 (HPCQ) each bind carbamoyl phosphate. Residues Asn165, Asp223, and 227 to 228 (SM) contribute to the L-ornithine site. Residues 263–264 (CL) and Arg291 contribute to the carbamoyl phosphate site.

This sequence belongs to the aspartate/ornithine carbamoyltransferase superfamily. OTCase family.

The protein resides in the cytoplasm. The enzyme catalyses carbamoyl phosphate + L-ornithine = L-citrulline + phosphate + H(+). Its pathway is amino-acid biosynthesis; L-arginine biosynthesis; L-arginine from L-ornithine and carbamoyl phosphate: step 1/3. Functionally, reversibly catalyzes the transfer of the carbamoyl group from carbamoyl phosphate (CP) to the N(epsilon) atom of ornithine (ORN) to produce L-citrulline. This is Ornithine carbamoyltransferase from Cupriavidus pinatubonensis (strain JMP 134 / LMG 1197) (Cupriavidus necator (strain JMP 134)).